Consider the following 487-residue polypeptide: (S)-N-methylcoclaurine 3'-hydroxylase isozyme 1 (487 aa).

The chain crosses the membrane as a helical span at residues 4 to 24 (TVALIAVIISSILYLLFGGSG). Cys429 contacts heme.

The protein belongs to the cytochrome P450 family. Heme is required as a cofactor.

It is found in the endoplasmic reticulum membrane. It localises to the microsome membrane. It catalyses the reaction (S)-N-methylcoclaurine + reduced [NADPH--hemoprotein reductase] + O2 = (S)-3'-hydroxy-N-methylcoclaurine + oxidized [NADPH--hemoprotein reductase] + H2O + H(+). The protein operates within alkaloid biosynthesis; (S)-reticuline biosynthesis; (S)-reticuline from (S)-norcoclaurine: step 3/4. Functionally, 3'-hydroxylation of (S)-N-methylcoclaurine. The sequence is that of (S)-N-methylcoclaurine 3'-hydroxylase isozyme 1 (CYP80B1) from Eschscholzia californica (California poppy).